A 347-amino-acid polypeptide reads, in one-letter code: Metacaspase-2 (347 aa).

Residues 1–70 form a regulates substrate access to the active site region; the sequence is MCSLITQLCD…QPWVATPLPG (70 aa). The active site involves histidine 158. Ca(2+) is bound by residues aspartate 173, aspartate 189, and aspartate 190. Residue cysteine 213 is part of the active site. Aspartate 220 provides a ligand contact to Ca(2+).

The protein belongs to the peptidase C14B family. Monomer. In terms of processing, auto-proteolytic cleavage of the propeptide after Lys-55 and between the large and small subunits after Lys-268 is required for catalytic activity towards large protein substrates but is dispensable towards small oligopeptide substrates. After processing, the propeptide and the large and small subunits remain associated by non-covalent bonds. In vivo, the unprocessed enzyme appears to be the predominant form.

The protein localises to the recycling endosome. Activated by Ca(2+). In response to calcium binding, the 280-loop, the 280-loop, a disordered loop consisting of residues 269-275, undergoes a conformational change which stabilizes substrates in the active site. The binding to the substrate triggers the release of the N-terminal region resulting in the activation of the enzyme. Proteolytic cleavage is required for catalytic activity towards large protein substrates. Functionally, cysteine protease that cleaves specifically after arginine or lysine residues. The sequence is that of Metacaspase-2 from Trypanosoma brucei brucei.